Consider the following 351-residue polypeptide: MASNGAAAGAMAPFFPPNFLLQMQQPLPLHHQHLQDHAHGGHGGHHLLPPPPPSLSPFLPDLAMDAPPPPMYEASGGDGGGGGAASEDEEDGCGGGGGGGGGEKKRRLSVEQVRTLERSFESGNKLEPERKAQLARALGLQPRQVAIWFQNRRARWKTKQLEKDFDALRRQLDAARAENDALLSLNSKLHAEIVALKGGAAAAGGGGSSCRQEAASELINLNVKETEASCSNRSENSSEINLDISRPAPPPPPPPANESPVNRGIPFYASIGRGGAGGVDIDQLLLRGGHSPSPAAVTTPPPPKMELGITGNGGGADAAAAGAGSFGGLLCGAVDEQPPFWPWADGHHHFH.

Residues 34-128 (LQDHAHGGHG…SFESGNKLEP (95 aa)) form a disordered region. The span at 56–65 (SPFLPDLAMD) shows a compositional bias: low complexity. The segment at residues 101 to 160 (GGEKKRRLSVEQVRTLERSFESGNKLEPERKAQLARALGLQPRQVAIWFQNRRARWKTKQ) is a DNA-binding region (homeobox). Positions 114-128 (RTLERSFESGNKLEP) are enriched in basic and acidic residues. The tract at residues 159–203 (KQLEKDFDALRRQLDAARAENDALLSLNSKLHAEIVALKGGAAAA) is leucine-zipper. Residues 227–263 (EASCSNRSENSSEINLDISRPAPPPPPPPANESPVNR) form a disordered region. Positions 228-240 (ASCSNRSENSSEI) are enriched in polar residues. The span at 247 to 257 (PAPPPPPPPAN) shows a compositional bias: pro residues.

The protein belongs to the HD-ZIP homeobox family. Class I subfamily. Expressed in seedlings, roots, stems, leaf sheaths and panicles.

It is found in the nucleus. Probable transcription factor. This is Homeobox-leucine zipper protein HOX23 (HOX23) from Oryza sativa subsp. indica (Rice).